The chain runs to 166 residues: Flagellar protein LafL (166 aa).

A helical membrane pass occupies residues 6–26 (MIAMFIAMIITSALVSAATIM).

Belongs to the FliL family.

Its subcellular location is the cell inner membrane. In terms of biological role, controls the rotational direction of flagella during chemotaxis. The polypeptide is Flagellar protein LafL (lafL) (Vibrio parahaemolyticus serotype O3:K6 (strain RIMD 2210633)).